The following is a 274-amino-acid chain: Nitrogenase iron protein (274 aa).

Glycine 8–serine 15 serves as a coordination point for ATP. Residue cysteine 94 coordinates [4Fe-4S] cluster. ADP-ribosylarginine; by dinitrogenase reductase ADP-ribosyltransferase is present on arginine 97. Cysteine 131 lines the [4Fe-4S] cluster pocket.

The protein belongs to the NifH/BchL/ChlL family. In terms of assembly, homodimer. The cofactor is [4Fe-4S] cluster. In terms of processing, the reversible ADP-ribosylation of Arg-97 inactivates the nitrogenase reductase and regulates nitrogenase activity.

It catalyses the reaction N2 + 8 reduced [2Fe-2S]-[ferredoxin] + 16 ATP + 16 H2O = H2 + 8 oxidized [2Fe-2S]-[ferredoxin] + 2 NH4(+) + 16 ADP + 16 phosphate + 6 H(+). The key enzymatic reactions in nitrogen fixation are catalyzed by the nitrogenase complex, which has 2 components: the iron protein and the molybdenum-iron protein. This chain is Nitrogenase iron protein, found in Desulfatibacillum aliphaticivorans.